Consider the following 523-residue polypeptide: 2-isopropylmalate synthase (523 aa).

A Pyruvate carboxyltransferase domain is found at 5-267 (VIIFDTTLRD…HTAINHQEIW (263 aa)). Mn(2+) contacts are provided by Asp-14, His-202, His-204, and Asn-238. Residues 392–523 (RLDYFSVQSS…QHNENNKETV (132 aa)) form a regulatory domain region.

The protein belongs to the alpha-IPM synthase/homocitrate synthase family. LeuA type 1 subfamily. In terms of assembly, homodimer. Mn(2+) is required as a cofactor.

The protein localises to the cytoplasm. The enzyme catalyses 3-methyl-2-oxobutanoate + acetyl-CoA + H2O = (2S)-2-isopropylmalate + CoA + H(+). It participates in amino-acid biosynthesis; L-leucine biosynthesis; L-leucine from 3-methyl-2-oxobutanoate: step 1/4. Its function is as follows. Catalyzes the condensation of the acetyl group of acetyl-CoA with 3-methyl-2-oxobutanoate (2-ketoisovalerate) to form 3-carboxy-3-hydroxy-4-methylpentanoate (2-isopropylmalate). The chain is 2-isopropylmalate synthase from Shigella dysenteriae serotype 1 (strain Sd197).